A 303-amino-acid chain; its full sequence is UDP-3-O-acyl-N-acetylglucosamine deacetylase (303 aa).

Residues His-78, His-237, and Asp-241 each coordinate Zn(2+). His-264 serves as the catalytic Proton donor.

This sequence belongs to the LpxC family. It depends on Zn(2+) as a cofactor.

It catalyses the reaction a UDP-3-O-[(3R)-3-hydroxyacyl]-N-acetyl-alpha-D-glucosamine + H2O = a UDP-3-O-[(3R)-3-hydroxyacyl]-alpha-D-glucosamine + acetate. It participates in glycolipid biosynthesis; lipid IV(A) biosynthesis; lipid IV(A) from (3R)-3-hydroxytetradecanoyl-[acyl-carrier-protein] and UDP-N-acetyl-alpha-D-glucosamine: step 2/6. In terms of biological role, catalyzes the hydrolysis of UDP-3-O-myristoyl-N-acetylglucosamine to form UDP-3-O-myristoylglucosamine and acetate, the committed step in lipid A biosynthesis. The sequence is that of UDP-3-O-acyl-N-acetylglucosamine deacetylase from Pseudomonas putida (strain GB-1).